The sequence spans 773 residues: Mitochondrial inner membrane m-AAA protease component yta12 (773 aa).

Residues 83–119 (FSVTSKRSQNGSSGSNSDANGRKNGQKNDDSKKKGLN) are disordered. Low complexity predominate over residues 87 to 101 (SKRSQNGSSGSNSDA). 2 consecutive transmembrane segments (helical) span residues 126-146 (VFEI…AYIL) and 239-259 (VLAT…VIYL). 8 residues coordinate ATP: Val-298, Ala-299, Thr-340, Gly-341, Lys-342, Thr-343, Leu-344, and His-479. His-561 provides a ligand contact to Zn(2+). Glu-562 is an active-site residue. Positions 565 and 638 each coordinate Zn(2+). Residues 752-773 (EYKNDHDPRNPPIPPSPQQPSA) form a disordered region. Positions 761–773 (NPPIPPSPQQPSA) are enriched in pro residues.

In the N-terminal section; belongs to the AAA ATPase family. It in the C-terminal section; belongs to the peptidase M41 family. As to quaternary structure, component of the m-AAA protease complex. Zn(2+) is required as a cofactor.

The protein localises to the mitochondrion membrane. It catalyses the reaction ATP + H2O = ADP + phosphate + H(+). Functionally, catalytic component of the m-AAA protease, a protease that plays a key role in proteostasis of inner mitochondrial membrane proteins. Possesses both ATPase and protease activities: the ATPase activity is required to unfold substrates, threading them into the internal proteolytic cavity for hydrolysis into small peptide fragments. The complex is necessary for the assembly of mitochondrial respiratory chain and ATPase complexes. The m-AAA protease carries out protein quality control in the inner membrane of the mitochondria by mediating degradation of mistranslated or misfolded polypeptides. It also mediates protein maturation of the mitochondrial ribosomal subunit mrpl32/bL32m by catalyzing the cleavage of the presequence of mrpl32/bL32m prior to assembly into the mitochondrial ribosome. Also acts as a membrane protein dislocase: required to dislocate moderately hydrophobic transmembrane segments from the membrane. In Schizosaccharomyces pombe (strain 972 / ATCC 24843) (Fission yeast), this protein is Mitochondrial inner membrane m-AAA protease component yta12 (yta12).